The sequence spans 282 residues: F-actin-capping protein subunit beta (282 aa).

The disordered stretch occupies residues 73-103; it reads SPWSNQFDPPLDEAGSGGVGAGGNEGAGEGA. Over residues 87–101 the composition is skewed to gly residues; the sequence is GSGGVGAGGNEGAGE.

It belongs to the F-actin-capping protein beta subunit family. As to quaternary structure, component of the F-actin capping complex, composed of a heterodimer of an alpha and a beta subunit.

It is found in the cytoplasm. The protein resides in the cytoskeleton. It localises to the actin patch. Functionally, F-actin-capping proteins bind in a Ca(2+)-independent manner to the fast growing ends of actin filaments (barbed end) thereby blocking the exchange of subunits at these ends. Unlike other capping proteins (such as gelsolin and severin), these proteins do not sever actin filaments. The sequence is that of F-actin-capping protein subunit beta (CAP2) from Gibberella zeae (strain ATCC MYA-4620 / CBS 123657 / FGSC 9075 / NRRL 31084 / PH-1) (Wheat head blight fungus).